The sequence spans 81 residues: Small ribosomal subunit protein bS18 (81 aa).

It belongs to the bacterial ribosomal protein bS18 family. In terms of assembly, part of the 30S ribosomal subunit. Forms a tight heterodimer with protein bS6.

In terms of biological role, binds as a heterodimer with protein bS6 to the central domain of the 16S rRNA, where it helps stabilize the platform of the 30S subunit. The chain is Small ribosomal subunit protein bS18 from Parvibaculum lavamentivorans (strain DS-1 / DSM 13023 / NCIMB 13966).